We begin with the raw amino-acid sequence, 195 residues long: ATP-dependent Clp protease proteolytic subunit (195 aa).

The active-site Nucleophile is the Ser98. The active site involves His123.

The protein belongs to the peptidase S14 family. Fourteen ClpP subunits assemble into 2 heptameric rings which stack back to back to give a disk-like structure with a central cavity, resembling the structure of eukaryotic proteasomes.

The protein localises to the cytoplasm. It carries out the reaction Hydrolysis of proteins to small peptides in the presence of ATP and magnesium. alpha-casein is the usual test substrate. In the absence of ATP, only oligopeptides shorter than five residues are hydrolyzed (such as succinyl-Leu-Tyr-|-NHMec, and Leu-Tyr-Leu-|-Tyr-Trp, in which cleavage of the -Tyr-|-Leu- and -Tyr-|-Trp bonds also occurs).. Functionally, cleaves peptides in various proteins in a process that requires ATP hydrolysis. Has a chymotrypsin-like activity. Plays a major role in the degradation of misfolded proteins. The polypeptide is ATP-dependent Clp protease proteolytic subunit (Staphylococcus aureus (strain Mu3 / ATCC 700698)).